The chain runs to 63 residues: MGRNHIHKNRDKNKQKLPQVPDALKRETDGVYEEYSTELADADDREAQERAKAADNRAKKKSR.

The segment covering 1 to 15 has biased composition (basic residues); that stretch reads MGRNHIHKNRDKNKQ. The segment at 1–63 is disordered; it reads MGRNHIHKNR…ADNRAKKKSR (63 aa). Residues 30–44 are compositionally biased toward acidic residues; the sequence is GVYEEYSTELADADD. The span at 45-57 shows a compositional bias: basic and acidic residues; that stretch reads REAQERAKAADNR.

This is an uncharacterized protein from Bacillus subtilis (strain 168).